Reading from the N-terminus, the 196-residue chain is Endoribonuclease YbeY (196 aa).

Positions 120, 124, and 130 each coordinate Zn(2+).

It belongs to the endoribonuclease YbeY family. Zn(2+) is required as a cofactor.

It localises to the cytoplasm. In terms of biological role, single strand-specific metallo-endoribonuclease involved in late-stage 70S ribosome quality control and in maturation of the 3' terminus of the 16S rRNA. This Corynebacterium glutamicum (strain ATCC 13032 / DSM 20300 / JCM 1318 / BCRC 11384 / CCUG 27702 / LMG 3730 / NBRC 12168 / NCIMB 10025 / NRRL B-2784 / 534) protein is Endoribonuclease YbeY.